We begin with the raw amino-acid sequence, 112 residues long: Ferredoxin-2 (112 aa).

2 consecutive 4Fe-4S ferredoxin-type domains span residues 2-30 (TYVV…YEGE) and 31-60 (NTLV…PDTE). [3Fe-4S] cluster is bound by residues Cys-9 and Cys-17. 4 residues coordinate [4Fe-4S] cluster: Cys-21, Cys-40, Cys-43, and Cys-46. Cys-50 is a [3Fe-4S] cluster binding site. The span at 85-103 (DPMPDHKKYDGETGKREKY) shows a compositional bias: basic and acidic residues. Residues 85–112 (DPMPDHKKYDGETGKREKYFSPNPGTGD) are disordered.

Requires [4Fe-4S] cluster as cofactor. [3Fe-4S] cluster serves as cofactor.

Its function is as follows. Ferredoxins are iron-sulfur proteins that transfer electrons in a wide variety of metabolic reactions. This chain is Ferredoxin-2 (fdxA), found in Rhodobacter capsulatus (strain ATCC BAA-309 / NBRC 16581 / SB1003).